Consider the following 957-residue polypeptide: Sorting nexin-13 (957 aa).

Positions 97–284 (ANIIDEPLQQ…YVIWMIRDSN (188 aa)) constitute a PXA domain. One can recognise an RGS domain in the interval 373–511 (PLDSILVDNV…SFRQNALYVR (139 aa)). The PX domain maps to 559 to 680 (VQLHAYISDT…DFLENKAYSK (122 aa)). A 1,2-diacyl-sn-glycero-3-phospho-(1D-myo-inositol-3-phosphate) contacts are provided by Arg-601, Ser-603, Lys-628, and Arg-642.

The protein belongs to the sorting nexin family.

It is found in the early endosome membrane. Functionally, may be involved in several stages of intracellular trafficking. Acts as a GAP for Galphas. May play a role in endosome homeostasis. This chain is Sorting nexin-13 (Snx13), found in Mus musculus (Mouse).